The chain runs to 339 residues: Methyltransferase ptaI (339 aa).

The protein belongs to the methyltransferase superfamily.

It participates in secondary metabolite biosynthesis. In terms of biological role, methyltransferase; part of the gene cluster that mediates the biosynthesis of pestheic acid, a diphenyl ether which is a biosynthetic precursor of the unique chloropupukeananes. The biosynthesis initiates from condensation of acetate and malonate units catalyzed by the non-reducing PKS ptaA. As the ptaA protein is TE/CLC domain-deficient, hydrolysis and Claisen cyclization of the polyketide could be catalyzed by ptaB containing a beta-lactamase domain. The ptaB protein might hydrolyze the thioester bond between the ACP of ptaA and the intermediate to release atrochrysone carboxylic acid, which is spontaneously dehydrated to form endocrocin anthrone. Endocrocin anthrone is then converted to endocrocin, catalyzed by the anthrone oxygenase ptaC. Spontaneous decarboxylation of endocrocin occurs to generate emodin. An O-methyltransferase (ptaH or ptaI) could methylate emodin to form physcion. PtaJ could then catalyze the oxidative cleavage of physcion, and rotation of the intermediate could then afford desmethylisosulochrin. PtaF, a putative NADH-dependent oxidoreductase, might also participate in the oxidative cleavage step. Desmethylisosulochrin is then transformed by another O-methyltransferase (ptaH or ptaI) to form isosulochrin. Chlorination of isosulochrin by ptaM in the cyclohexadienone B ring then produces chloroisosulochrin. PtaE is responsible for the oxidative coupling reactions of both benzophenones isosulouchrin and chloroisosulochrin to RES-1214-1 and pestheic acid respectively, regardless of chlorination. This chain is Methyltransferase ptaI, found in Pestalotiopsis fici (strain W106-1 / CGMCC3.15140).